The primary structure comprises 110 residues: Large ribosomal subunit protein uL22 (110 aa).

It belongs to the universal ribosomal protein uL22 family. Part of the 50S ribosomal subunit.

This protein binds specifically to 23S rRNA; its binding is stimulated by other ribosomal proteins, e.g. L4, L17, and L20. It is important during the early stages of 50S assembly. It makes multiple contacts with different domains of the 23S rRNA in the assembled 50S subunit and ribosome. Its function is as follows. The globular domain of the protein is located near the polypeptide exit tunnel on the outside of the subunit, while an extended beta-hairpin is found that lines the wall of the exit tunnel in the center of the 70S ribosome. This Vibrio cholerae serotype O1 (strain ATCC 39541 / Classical Ogawa 395 / O395) protein is Large ribosomal subunit protein uL22.